Reading from the N-terminus, the 319-residue chain is HPr kinase/phosphorylase (319 aa).

Catalysis depends on residues histidine 146 and lysine 167. An ATP-binding site is contributed by 161 to 168 (GESGLGKS). Residue serine 168 participates in Mg(2+) binding. The active-site Proton acceptor; for phosphorylation activity. Proton donor; for dephosphorylation activity is the aspartate 185. Residues 209-218 (LEVRGIGLLD) are important for the catalytic mechanism of both phosphorylation and dephosphorylation. Residue glutamate 210 coordinates Mg(2+). The active site involves arginine 252. Residues 273–278 (QVVAGR) are important for the catalytic mechanism of dephosphorylation.

The protein belongs to the HPrK/P family. Homohexamer. Mg(2+) serves as cofactor.

The catalysed reaction is [HPr protein]-L-serine + ATP = [HPr protein]-O-phospho-L-serine + ADP + H(+). The enzyme catalyses [HPr protein]-O-phospho-L-serine + phosphate + H(+) = [HPr protein]-L-serine + diphosphate. In terms of biological role, catalyzes the ATP- as well as the pyrophosphate-dependent phosphorylation of a specific serine residue in HPr, a phosphocarrier protein of the phosphoenolpyruvate-dependent sugar phosphotransferase system (PTS). HprK/P also catalyzes the pyrophosphate-producing, inorganic phosphate-dependent dephosphorylation (phosphorolysis) of seryl-phosphorylated HPr (P-Ser-HPr). In Variovorax paradoxus (strain S110), this protein is HPr kinase/phosphorylase.